We begin with the raw amino-acid sequence, 646 residues long: 1-deoxy-D-xylulose-5-phosphate synthase (646 aa).

Residues His-86 and 127–129 (AHS) contribute to the thiamine diphosphate site. Asp-158 contacts Mg(2+). Thiamine diphosphate contacts are provided by residues 159 to 160 (GA), Asn-188, Tyr-295, and Glu-377. Asn-188 provides a ligand contact to Mg(2+).

It belongs to the transketolase family. DXPS subfamily. As to quaternary structure, homodimer. Requires Mg(2+) as cofactor. Thiamine diphosphate is required as a cofactor.

The catalysed reaction is D-glyceraldehyde 3-phosphate + pyruvate + H(+) = 1-deoxy-D-xylulose 5-phosphate + CO2. The protein operates within metabolic intermediate biosynthesis; 1-deoxy-D-xylulose 5-phosphate biosynthesis; 1-deoxy-D-xylulose 5-phosphate from D-glyceraldehyde 3-phosphate and pyruvate: step 1/1. Its function is as follows. Catalyzes the acyloin condensation reaction between C atoms 2 and 3 of pyruvate and glyceraldehyde 3-phosphate to yield 1-deoxy-D-xylulose-5-phosphate (DXP). In Burkholderia ambifaria (strain ATCC BAA-244 / DSM 16087 / CCUG 44356 / LMG 19182 / AMMD) (Burkholderia cepacia (strain AMMD)), this protein is 1-deoxy-D-xylulose-5-phosphate synthase.